The following is a 249-amino-acid chain: Adenylate kinase (249 aa).

43–48 (GAGKGT) contributes to the ATP binding site. The segment at 63 to 92 (ATGDMLRAQVAAKSALGVEAKKIMDQGGLV) is NMP. AMP contacts are provided by residues Thr64, Arg69, 90-92 (GLV), 119-122 (GFPR), and Gln126. The segment at 160–197 (GRLVHPASGRSYHKLFNPPKKDMIDDVSGDALVQRSDD) is LID. Residues Arg161 and 170-171 (SY) contribute to the ATP site. Residues Arg194 and Arg205 each coordinate AMP. Residue Gln233 participates in ATP binding.

Belongs to the adenylate kinase family. AK2 subfamily. In terms of assembly, monomer.

It localises to the cytoplasm. The protein resides in the cytosol. Its subcellular location is the mitochondrion intermembrane space. The catalysed reaction is AMP + ATP = 2 ADP. Functionally, catalyzes the reversible transfer of the terminal phosphate group between ATP and AMP. Plays an important role in cellular energy homeostasis and in adenine nucleotide metabolism. Adenylate kinase activity is critical for regulation of the phosphate utilization and the AMP de novo biosynthesis pathways. This is Adenylate kinase from Debaryomyces hansenii (strain ATCC 36239 / CBS 767 / BCRC 21394 / JCM 1990 / NBRC 0083 / IGC 2968) (Yeast).